Reading from the N-terminus, the 314-residue chain is Dihydroorotate dehydrogenase (fumarate) (314 aa).

Substrate contacts are provided by residues Lys46, 70-74, and Asn130; that span reads NSMGL. 46-47 is a binding site for FMN; the sequence is KS. Asn130 is a binding site for FMN. Residues Ser132 and Cys133 each act as nucleophile in the active site. FMN is bound by residues Lys167 and Ile195. Residue 196–197 coordinates substrate; the sequence is NS. FMN is bound by residues Gly224, 252–253, and 274–275; these read GG and GT.

This sequence belongs to the dihydroorotate dehydrogenase family. Type 1 subfamily. In terms of assembly, homodimer. Requires FMN as cofactor.

The protein localises to the cytoplasm. It carries out the reaction (S)-dihydroorotate + fumarate = orotate + succinate. It participates in pyrimidine metabolism; UMP biosynthesis via de novo pathway. In terms of biological role, catalyzes the conversion of dihydroorotate to orotate with fumarate as the electron acceptor. The chain is Dihydroorotate dehydrogenase (fumarate) (URA1) from Saccharomyces mikatae (Yeast).